A 217-amino-acid chain; its full sequence is Large ribosomal subunit protein uL29m (217 aa).

This sequence belongs to the universal ribosomal protein uL29 family. Component of the mitochondrial large ribosomal subunit. Mature mitochondrial ribosomes consist of a small (37S) and a large (54S) subunit. The 37S subunit contains at least 33 different proteins and 1 molecule of RNA (15S). The 54S subunit contains at least 45 different proteins and 1 molecule of RNA (21S).

Its subcellular location is the mitochondrion. The chain is Large ribosomal subunit protein uL29m (mrpl4) from Aspergillus clavatus (strain ATCC 1007 / CBS 513.65 / DSM 816 / NCTC 3887 / NRRL 1 / QM 1276 / 107).